The chain runs to 732 residues: Catalase-peroxidase (732 aa).

Residues 1–24 form a disordered region; it reads MDAKTDDNSAGKCPVAHGSAGRTN. Residues 96–219 constitute a cross-link (tryptophyl-tyrosyl-methioninium (Trp-Tyr) (with M-245)); it reads WHSAGTYRIA…LGAVQMGLIY (124 aa). The Proton acceptor role is filled by H97. Residues 219–245 constitute a cross-link (tryptophyl-tyrosyl-methioninium (Tyr-Met) (with W-96)); the sequence is YVNPEGPNGNPDPLAAARDIRDTFARM. Residue H260 coordinates heme b.

The protein belongs to the peroxidase family. Peroxidase/catalase subfamily. In terms of assembly, homodimer or homotetramer. The cofactor is heme b. In terms of processing, formation of the three residue Trp-Tyr-Met cross-link is important for the catalase, but not the peroxidase activity of the enzyme.

It catalyses the reaction H2O2 + AH2 = A + 2 H2O. The catalysed reaction is 2 H2O2 = O2 + 2 H2O. Its function is as follows. Bifunctional enzyme with both catalase and broad-spectrum peroxidase activity. This Mesorhizobium japonicum (strain LMG 29417 / CECT 9101 / MAFF 303099) (Mesorhizobium loti (strain MAFF 303099)) protein is Catalase-peroxidase.